A 39-amino-acid polypeptide reads, in one-letter code: Photosystem II reaction center protein J (39 aa).

The helical transmembrane segment at 9–29 (LWMVATVGGLAAGGLLILFVF) threads the bilayer.

It belongs to the PsbJ family. As to quaternary structure, PSII is composed of 1 copy each of membrane proteins PsbA, PsbB, PsbC, PsbD, PsbE, PsbF, PsbH, PsbI, PsbJ, PsbK, PsbL, PsbM, PsbT, PsbX, PsbY, PsbZ, Psb30/Ycf12, at least 3 peripheral proteins of the oxygen-evolving complex and a large number of cofactors. It forms dimeric complexes.

Its subcellular location is the plastid. It is found in the chloroplast thylakoid membrane. One of the components of the core complex of photosystem II (PSII). PSII is a light-driven water:plastoquinone oxidoreductase that uses light energy to abstract electrons from H(2)O, generating O(2) and a proton gradient subsequently used for ATP formation. It consists of a core antenna complex that captures photons, and an electron transfer chain that converts photonic excitation into a charge separation. In Emiliania huxleyi (Coccolithophore), this protein is Photosystem II reaction center protein J.